The sequence spans 22 residues: Pectinesterase (22 aa).

Catalysis depends on Asp-6, which acts as the Proton donor. Substrate-binding residues include Arg-19 and Trp-21.

The protein belongs to the pectinesterase family.

Its subcellular location is the secreted. It localises to the cell wall. It catalyses the reaction [(1-&gt;4)-alpha-D-galacturonosyl methyl ester](n) + n H2O = [(1-&gt;4)-alpha-D-galacturonosyl](n) + n methanol + n H(+). It participates in glycan metabolism; pectin degradation; 2-dehydro-3-deoxy-D-gluconate from pectin: step 1/5. This is Pectinesterase from Capsicum chinense (Scotch bonnet).